We begin with the raw amino-acid sequence, 373 residues long: 2-phosphonomethylmalate synthase (373 aa).

The region spanning 5–256 (LVLEDTTLRD…DLGIDLTKLK (252 aa)) is the Pyruvate carboxyltransferase domain.

Belongs to the alpha-IPM synthase/homocitrate synthase family.

The enzyme catalyses 3-phosphonopyruvate + acetyl-CoA + H2O = (R)-2-(phosphonomethyl)malate + CoA + H(+). The protein operates within antibiotic biosynthesis. In terms of biological role, acyltransferase involved in the biosynthesis of the phosphonate antibiotic FR-900098, a potent antimalarial agent that acts as an inhibitor of 1-deoxy-D-xylulose 5-phosphate reductoisomerase (DXR), the first enzyme in the nonmevalonate pathway for isoprenoid biosynthesis. Catalyzes the condensation between acetyl-CoA and phosphonopyruvate to yield (R)-2-(phosphonomethyl)malate. This is 2-phosphonomethylmalate synthase from Streptomyces rubellomurinus (strain ATCC 31215).